Here is a 172-residue protein sequence, read N- to C-terminus: Epithelial membrane protein 2 (172 aa).

4 consecutive transmembrane segments (helical) span residues 1–21 (MLVILAFIIVFHIVSTALLFI), 72–92 (TMILSTILSCISFLIFLLQLF), 100–120 (FVLTAIIQLMSCLCVMIGASV), and 148–168 (FILAWVAFAFTFISGLMYMIL).

This sequence belongs to the PMP-22/EMP/MP20 family. In terms of assembly, interacts with PTK2; regulates PTK2 activation and localization. Interacts with ITGB3; regulates the levels of the heterodimer ITGA5-ITGB3 integrin surface expression. Interacts with P2RX7 (via C-terminus). Interacts with ITGB1; the interaction may be direct or indirect and ITGB1 has a heterodimer form. As to expression, expressed in glomeruli.

The protein localises to the golgi apparatus membrane. It localises to the cell membrane. The protein resides in the apical cell membrane. Its subcellular location is the membrane raft. It is found in the cytoplasm. The protein localises to the nucleus. It localises to the perinuclear region. Functionally, functions as a key regulator of cell membrane composition by regulating protein surface expression. Also, plays a role in regulation of processes including cell migration, cell proliferation, cell contraction and cell adhesion. Regulates transepithelial migration of neutrophils into the alveolar lumen, potentially via mediation of cell surface expression of adhesion markers and lipid raft formation. Negatively regulates caveolae formation by reducing CAV1 expression and CAV1 amount by increasing lysosomal degradation. Facilitates surface trafficking and the formation of lipid rafts bearing GPI-anchor proteins. Regulates surface expression of MHC1 and ICAM1 proteins increasing susceptibility to T-cell mediated cytotoxicity. Regulates the plasma membrane expression of the integrin heterodimers ITGA6-ITGB1, ITGA5-ITGB3 and ITGA5-ITGB1 resulting in modulation of cell-matrix adhesion. Also regulates many processes through PTK2. Regulates blood vessel endothelial cell migration and angiogenesis by regulating VEGF protein expression through PTK2 activation. Regulates cell migration and cell contraction through PTK2 and SRC activation. Regulates focal adhesion density, F-actin conformation and cell adhesion capacity through interaction with PTK2. Positively regulates cell proliferation. Plays a role during cell death and cell blebbing. Promotes angiogenesis and vasculogenesis through induction of VEGFA via a HIF1A-dependent pathway. Also plays a role in embryo implantation by regulating surface trafficking of integrin heterodimer ITGA5-ITGB3. Plays a role in placental angiogenesis and uterine natural killer cell regulation at the maternal-fetal placental interface, however not required in the maternal tissues for a viable pregnancy. Involved in the early stages of embryogenic development and cardiogenesis, potentially via regulation of epithelial-mesenchymal transition timing. May play a role in glomerular filtration. This Rattus norvegicus (Rat) protein is Epithelial membrane protein 2 (Emp2).